Here is a 232-residue protein sequence, read N- to C-terminus: Enolase-phosphatase E1 (232 aa).

The protein belongs to the HAD-like hydrolase superfamily. MasA/MtnC family. As to quaternary structure, monomer. Requires Mg(2+) as cofactor.

The enzyme catalyses 5-methylsulfanyl-2,3-dioxopentyl phosphate + H2O = 1,2-dihydroxy-5-(methylsulfanyl)pent-1-en-3-one + phosphate. It functions in the pathway amino-acid biosynthesis; L-methionine biosynthesis via salvage pathway; L-methionine from S-methyl-5-thio-alpha-D-ribose 1-phosphate: step 3/6. Its pathway is amino-acid biosynthesis; L-methionine biosynthesis via salvage pathway; L-methionine from S-methyl-5-thio-alpha-D-ribose 1-phosphate: step 4/6. Its function is as follows. Bifunctional enzyme that catalyzes the enolization of 2,3-diketo-5-methylthiopentyl-1-phosphate (DK-MTP-1-P) into the intermediate 2-hydroxy-3-keto-5-methylthiopentenyl-1-phosphate (HK-MTPenyl-1-P), which is then dephosphorylated to form the acireductone 1,2-dihydroxy-3-keto-5-methylthiopentene (DHK-MTPene). The polypeptide is Enolase-phosphatase E1 (Xanthomonas oryzae pv. oryzae (strain KACC10331 / KXO85)).